Here is an 88-residue protein sequence, read N- to C-terminus: Beta-insect excitatory toxin LqhIT1b (88 aa).

Positions 1–18 (MKFFLLFLVVLPIMGVLG) are cleaved as a signal peptide. An LCN-type CS-alpha/beta domain is found at 20-83 (KNGYAVDSKG…ISDTTKKYCD (64 aa)). Cystine bridges form between cysteine 34–cysteine 55, cysteine 40–cysteine 60, cysteine 44–cysteine 62, and cysteine 56–cysteine 82.

Belongs to the long (4 C-C) scorpion toxin superfamily. Sodium channel inhibitor family. Beta subfamily. In terms of tissue distribution, expressed by the venom gland.

The protein resides in the secreted. Excitatory insect toxins induce a spastic paralysis. They bind voltage-independently at site-4 of sodium channels (Nav) and shift the voltage of activation toward more negative potentials thereby affecting sodium channel activation and promoting spontaneous and repetitive firing. This is Beta-insect excitatory toxin LqhIT1b from Leiurus hebraeus (Hebrew deathstalker scorpion).